We begin with the raw amino-acid sequence, 128 residues long: Glycine cleavage system H protein (128 aa).

The Lipoyl-binding domain maps to 25–107 (TVRVGITDFA…YEGGWLFEIT (83 aa)). Lysine 66 carries the post-translational modification N6-lipoyllysine.

This sequence belongs to the GcvH family. The glycine cleavage system is composed of four proteins: P, T, L and H. (R)-lipoate serves as cofactor.

In terms of biological role, the glycine cleavage system catalyzes the degradation of glycine. The H protein shuttles the methylamine group of glycine from the P protein to the T protein. The sequence is that of Glycine cleavage system H protein from Micrococcus luteus (strain ATCC 4698 / DSM 20030 / JCM 1464 / CCM 169 / CCUG 5858 / IAM 1056 / NBRC 3333 / NCIMB 9278 / NCTC 2665 / VKM Ac-2230) (Micrococcus lysodeikticus).